Reading from the N-terminus, the 213-residue chain is MKSLQALFGGTFDPVHYGHLKPVETLANLIGLTRVTIIPNNVPPHRPQPEANSVQRKHMLELAIADKPLFTLDERELKRNAPSYTAQTLKEWRQEQWPDVPLAFIIGQDSLLTFPTWYEYETILDNAHLIVCRRPGYPLEMAQPQYQQWLEDHLTHNPEDLHLQPAGKIYLAETPWFNISATIIRERLQNGESCEDLLPEPVLTYINQQGLYR.

The protein belongs to the NadD family.

The enzyme catalyses nicotinate beta-D-ribonucleotide + ATP + H(+) = deamido-NAD(+) + diphosphate. Its pathway is cofactor biosynthesis; NAD(+) biosynthesis; deamido-NAD(+) from nicotinate D-ribonucleotide: step 1/1. In terms of biological role, catalyzes the reversible adenylation of nicotinate mononucleotide (NaMN) to nicotinic acid adenine dinucleotide (NaAD). The protein is Probable nicotinate-nucleotide adenylyltransferase of Escherichia coli O17:K52:H18 (strain UMN026 / ExPEC).